The primary structure comprises 145 residues: Pseudoazurin (145 aa).

A signal peptide spans 1–22 (MFHHSLAAAAAALLALAAPGFA). A Plastocyanin-like domain is found at 27 to 115 (VHMLNKGESG…MGMVGLVQVG (89 aa)). The Cu cation site is built by histidine 62, cysteine 100, histidine 103, and methionine 108. The disordered stretch occupies residues 126–145 (TAKMPKKARERMDAELAQVN).

In terms of assembly, homodimer. Cu cation serves as cofactor.

It is found in the periplasm. This soluble electron transfer copper protein is required for the inactivation of copper-containing nitrite reductase in the presence of oxygen. The protein is Pseudoazurin (pazS) of Paracoccus pantotrophus (Thiosphaera pantotropha).